Reading from the N-terminus, the 928-residue chain is Arf guanine nucleotide exchange factor sec74 (928 aa).

2 stretches are compositionally biased toward polar residues: residues 1–12 (MDESSRIASSSA) and 57–83 (TITS…STTD). Disordered stretches follow at residues 1 to 152 (MDES…RPSS) and 227 to 249 (SLSS…EDFG). S67 is subject to Phosphoserine. 2 stretches are compositionally biased toward low complexity: residues 89 to 102 (GHSS…KVSS) and 115 to 132 (SKSS…TSSS). Residues 228-420 (LSSNFSARTP…ECFYDNITYT (193 aa)) enclose the SEC7 domain. Positions 234 to 245 (ARTPASNQSSVS) are enriched in polar residues. The 130-residue stretch at 548–677 (KVFKLGILIQ…WLVKINFVST (130 aa)) folds into the PH domain.

It is found in the cytoplasm. The protein localises to the cell tip. Its function is as follows. Guanine nucleotide exchange factor for Arf GTPases, stimulating the nucleotide exchange from the GDP-bound to the GTP-bound form. Involved in vesicular transport. The polypeptide is Arf guanine nucleotide exchange factor sec74 (sec74) (Schizosaccharomyces pombe (strain 972 / ATCC 24843) (Fission yeast)).